The chain runs to 90 residues: Probable small nuclear ribonucleoprotein F (90 aa).

The 74-residue stretch at 7 to 80 (NPRPFLQDLV…VLYIKKADEA (74 aa)) folds into the Sm domain.

It belongs to the snRNP Sm proteins family. SmF/LSm6 subfamily.

The protein resides in the nucleus. The protein localises to the cytoplasm. Plays a role in pre-mRNA splicing as a core component of the spliceosomal U1, U2, U4 and U5 small nuclear ribonucleoproteins (snRNPs), the building blocks of the spliceosome. In Neurospora crassa (strain ATCC 24698 / 74-OR23-1A / CBS 708.71 / DSM 1257 / FGSC 987), this protein is Probable small nuclear ribonucleoprotein F.